Consider the following 426-residue polypeptide: Probable glucose-6-phosphate isomerase (426 aa).

The active-site Proton donor is glutamate 272. Residues histidine 293 and lysine 404 contribute to the active site.

Belongs to the GPI family.

The protein localises to the cytoplasm. The catalysed reaction is alpha-D-glucose 6-phosphate = beta-D-fructose 6-phosphate. It participates in carbohydrate biosynthesis; gluconeogenesis. It functions in the pathway carbohydrate degradation; glycolysis; D-glyceraldehyde 3-phosphate and glycerone phosphate from D-glucose: step 2/4. Its function is as follows. Catalyzes the reversible isomerization of glucose-6-phosphate to fructose-6-phosphate. This is Probable glucose-6-phosphate isomerase from Halobacterium salinarum (strain ATCC 700922 / JCM 11081 / NRC-1) (Halobacterium halobium).